A 290-amino-acid polypeptide reads, in one-letter code: 4-hydroxybenzoate octaprenyltransferase (290 aa).

Helical transmembrane passes span 33-53 (LWALWVASPGVPPLWILAVFV), 99-119 (LFVILVLLSFLLVLTLNVKTI), 141-161 (LPQVVLGAAFGWSIPMAFCAV), 213-233 (LIIGLLQIAVLALLGTVGWLN), 234-254 (GLGAFYYAGLAGAGALFIWQQ), and 268-288 (AFLNNNYVGLLVFIGLALSYL).

Belongs to the UbiA prenyltransferase family. It depends on Mg(2+) as a cofactor.

The protein localises to the cell inner membrane. The enzyme catalyses all-trans-octaprenyl diphosphate + 4-hydroxybenzoate = 4-hydroxy-3-(all-trans-octaprenyl)benzoate + diphosphate. It functions in the pathway cofactor biosynthesis; ubiquinone biosynthesis. Functionally, catalyzes the prenylation of para-hydroxybenzoate (PHB) with an all-trans polyprenyl group. Mediates the second step in the final reaction sequence of ubiquinone-8 (UQ-8) biosynthesis, which is the condensation of the polyisoprenoid side chain with PHB, generating the first membrane-bound Q intermediate 3-octaprenyl-4-hydroxybenzoate. This is 4-hydroxybenzoate octaprenyltransferase from Cronobacter sakazakii (strain ATCC BAA-894) (Enterobacter sakazakii).